The following is a 147-amino-acid chain: D-aminoacyl-tRNA deacylase (147 aa).

Residues 137–138 carry the Gly-cisPro motif, important for rejection of L-amino acids motif; that stretch reads GP.

Belongs to the DTD family. In terms of assembly, homodimer.

It localises to the cytoplasm. The catalysed reaction is glycyl-tRNA(Ala) + H2O = tRNA(Ala) + glycine + H(+). The enzyme catalyses a D-aminoacyl-tRNA + H2O = a tRNA + a D-alpha-amino acid + H(+). In terms of biological role, an aminoacyl-tRNA editing enzyme that deacylates mischarged D-aminoacyl-tRNAs. Also deacylates mischarged glycyl-tRNA(Ala), protecting cells against glycine mischarging by AlaRS. Acts via tRNA-based rather than protein-based catalysis; rejects L-amino acids rather than detecting D-amino acids in the active site. By recycling D-aminoacyl-tRNA to D-amino acids and free tRNA molecules, this enzyme counteracts the toxicity associated with the formation of D-aminoacyl-tRNA entities in vivo and helps enforce protein L-homochirality. Upon expression in B.subtilis strain 168 confers resistance to D-Tyr and D-Asp, suggesting it acts on both of these amino acids. The protein is D-aminoacyl-tRNA deacylase of Bacillus amyloliquefaciens (Bacillus velezensis).